The primary structure comprises 531 residues: Calcium-dependent protein kinase 21 (531 aa).

Residues methionine 1–lysine 10 are compositionally biased toward basic residues. The disordered stretch occupies residues methionine 1–valine 62. Glycine 2 is lipidated: N-myristoyl glycine. Residues isoleucine 48–valine 60 are compositionally biased toward polar residues. One can recognise a Protein kinase domain in the interval tyrosine 80 to isoleucine 338. ATP contacts are provided by residues leucine 86–threonine 94 and lysine 109. Catalysis depends on aspartate 204, which acts as the Proton acceptor. Serine 244 bears the Phosphoserine mark. Residues alanine 343–isoleucine 373 form an autoinhibitory domain region. EF-hand domains are found at residues glutamate 380–arginine 415, leucine 416–leucine 451, aspartate 452–glycine 487, and aspartate 488–glutamine 522. Ca(2+) is bound by residues aspartate 393, aspartate 395, serine 397, threonine 399, glutamate 404, aspartate 429, aspartate 431, asparagine 433, threonine 435, glutamate 440, aspartate 465, aspartate 467, serine 469, histidine 471, glutamate 476, aspartate 500, aspartate 502, aspartate 504, arginine 506, and glutamate 511.

This sequence belongs to the protein kinase superfamily. Ser/Thr protein kinase family. CDPK subfamily. In terms of assembly, interacts with SLAC1 and ABI1.

The protein localises to the cell membrane. The catalysed reaction is L-seryl-[protein] + ATP = O-phospho-L-seryl-[protein] + ADP + H(+). It catalyses the reaction L-threonyl-[protein] + ATP = O-phospho-L-threonyl-[protein] + ADP + H(+). Activated by calcium. Autophosphorylation may play an important role in the regulation of the kinase activity. Its function is as follows. May play a role in signal transduction pathways that involve calcium as a second messenger. Mediates the phosphorylation and activation of the S-type anion efflux channel SLAC1. The chain is Calcium-dependent protein kinase 21 (CPK21) from Arabidopsis thaliana (Mouse-ear cress).